Here is a 1095-residue protein sequence, read N- to C-terminus: Tyrosine-sulfated glycopeptide receptor 1 (1095 aa).

Residues 23–43 (PHMVLFVLLYVLSISVFFLTV) traverse the membrane as a helical segment. N-linked (GlcNAc...) asparagine glycosylation is found at N62 and N73. LRR repeat units lie at residues 91–115 (ENRV…VLDL), 116–139 (QRLS…FLSA), 141–165 (DQLL…SFGN), 170–195 (IFPI…VFLQ), 197–221 (AFNL…MCTA), 223–246 (PQLT…LSRC), 247–270 (SRLS…IYNL), 271–294 (PELE…ITRL), 295–318 (TKLT…IGKL), 320–342 (KLSS…LANC), 344–366 (KLVK…DFSR), 367–391 (FQSL…VYSC), 393–415 (MMTA…VLEL), 416–439 (ESLS…SILQ), 441–466 (CKKL…DFLR), 470–494 (FPSL…LIKL), 495–517 (QRVE…WLGT), 518–542 (LPDL…LFQL), and 566–589 (NPNN…IYIK). The N-linked (GlcNAc...) asparagine glycan is linked to N165. N-linked (GlcNAc...) asparagine glycosylation is found at N199, N204, and N207. N258 carries N-linked (GlcNAc...) asparagine glycosylation. N341 carries an N-linked (GlcNAc...) asparagine glycan. N377 carries an N-linked (GlcNAc...) asparagine glycan. N430 is a glycosylation site (N-linked (GlcNAc...) asparagine). N-linked (GlcNAc...) asparagine glycans are attached at residues N569, N592, N616, N627, N640, N662, and N714. LRR repeat units follow at residues 604–628 (LKVL…LSNL), 629–652 (TNLE…LTGL), and 654–677 (FLSY…QFDT). Residues 721-741 (LVLGLFFGVSLILVLLALLVL) traverse the membrane as a helical segment. Residues T792 and T800 each carry the phosphothreonine modification. The region spanning 803-1074 (FSQANIIGCG…PNIQQVVDWL (272 aa)) is the Protein kinase domain. ATP is bound by residues 809 to 817 (IGCGGFGLV) and K831. Phosphotyrosine occurs at positions 876 and 916. The Proton acceptor role is filled by D929. Y971 bears the Phosphotyrosine mark.

This sequence belongs to the protein kinase superfamily. Ser/Thr protein kinase family. In terms of assembly, homo- and heterodimers with PSKR1. Interacts (via C-terminus) with AHA1 and AHA2 (via the R-domain). In terms of processing, autophosphorylated. As to expression, expressed ubiquitously, including in the shoot apical meristem and in the elongation zone of the root meristem.

The protein localises to the cell membrane. The enzyme catalyses L-seryl-[protein] + ATP = O-phospho-L-seryl-[protein] + ADP + H(+). It carries out the reaction L-threonyl-[protein] + ATP = O-phospho-L-threonyl-[protein] + ADP + H(+). Tyrosine-sulfated glycopeptide receptor with a serine/threonine-protein kinase activity. Regulates, in response to tyrosine-sulfated glycopeptide binding, a signaling cascade involved in cellular proliferation and plant growth. Not involved in PSK perception. Involved in plant immunity, with antagonistic effects on bacterial and fungal resistances. Mediates activation of the plasma membrane H(+)-ATPase by PSY1. Phosphorylates AHA2 at Thr-881. In Arabidopsis thaliana (Mouse-ear cress), this protein is Tyrosine-sulfated glycopeptide receptor 1.